The primary structure comprises 501 residues: MSLPSIGSVGSDRMAAYMHGQQVYTGQFGDPNLTPPQAETQMSAQASAQAVGQEPEPDYKLVIRQEPQRARVAQGKEKGTDRKPIDPPPIVQLIRTARSDPAQIYLQSPYYFMACTLIKGSDDDPDPNPNSMLGTLVSSLHKLRDLNNEDGGFFIFGDLSIKIEGVFRLQFTLFQMKDSTCVFLDSATSQPFTVYPQKNFEGMAESTFLTRSFSDQGVRLRVRKDSRAMTTRKRNHQHAEVAKKHSEWDRKQTSAVSRHSSINENDSTPTDTRGLASFAGAGSSGYYDQHRSHYGETYGHDTYYGGARSVKRARHEVSPGQYALPDLPQQAYATRQPSFSDSVASMTMPPVTTAAPSLAGINPMSSHHGYTGSAHPGFAPHRINTQVGGSHLAPQPHSAIGSVNQGYQSPSTHHQPHPHTAHPAGGQAYPSPSPRQSPGTAPNYHYGSHHSQQTPVSLGLETYTSAGVVGMPGPGQLVGTSAPSPHLGQGYRHGMINEPGA.

3 disordered regions span residues 26–55 (GQFG…GQEP), 67–88 (PQRA…IDPP), and 228–274 (AMTT…DTRG). Over residues 35 to 50 (PPQAETQMSAQASAQA) the composition is skewed to polar residues. One can recognise a Velvet domain in the interval 52 to 223 (GQEPEPDYKL…SDQGVRLRVR (172 aa)). Composition is skewed to basic and acidic residues over residues 67 to 85 (PQRA…RKPI) and 237 to 252 (QHAE…DRKQ). The span at 253–271 (TSAVSRHSSINENDSTPTD) shows a compositional bias: polar residues. The Nuclear localization signal signature appears at 364 to 371 (MSSHHGYT). Disordered regions lie at residues 378–455 (FAPH…QQTP) and 474–501 (PGQL…EPGA).

The protein belongs to the velvet family. VosA subfamily. As to quaternary structure, forms a heterodimeric complex with VELB; the formation of the VELB-VOSA complex is light-dependent.

The protein resides in the nucleus. In terms of biological role, component of the VELB-VOSA heterodimeric complex that plays a dual role in activating genes associated with spore maturation and repressing certain development-associated genes. The complex binds DNA through the DNA-binding domain of VOSA that recognizes an 11-nucleotide consensus sequence 5'-CTGGCCGCGGC-3' consisting of two motifs in the promoters of key developmental regulatory genes. Appears dispensable for the development and pathogenicity. In Pyricularia oryzae (strain 70-15 / ATCC MYA-4617 / FGSC 8958) (Rice blast fungus), this protein is Spore development regulator VOSA.